We begin with the raw amino-acid sequence, 258 residues long: Glutamate racemase (258 aa).

Residues 11 to 12 (DS) and 43 to 44 (YG) contribute to the substrate site. C74 acts as the Proton donor/acceptor in catalysis. 75-76 (NT) lines the substrate pocket. C182 functions as the Proton donor/acceptor in the catalytic mechanism. 183-184 (TH) provides a ligand contact to substrate.

Belongs to the aspartate/glutamate racemases family.

It catalyses the reaction L-glutamate = D-glutamate. It functions in the pathway cell wall biogenesis; peptidoglycan biosynthesis. Functionally, provides the (R)-glutamate required for cell wall biosynthesis. This chain is Glutamate racemase, found in Leptospira borgpetersenii serovar Hardjo-bovis (strain JB197).